Here is a 101-residue protein sequence, read N- to C-terminus: Urease subunit beta (101 aa).

This sequence belongs to the urease beta subunit family. Heterotrimer of UreA (gamma), UreB (beta) and UreC (alpha) subunits. Three heterotrimers associate to form the active enzyme.

It is found in the cytoplasm. It catalyses the reaction urea + 2 H2O + H(+) = hydrogencarbonate + 2 NH4(+). It functions in the pathway nitrogen metabolism; urea degradation; CO(2) and NH(3) from urea (urease route): step 1/1. This Ralstonia nicotianae (strain ATCC BAA-1114 / GMI1000) (Ralstonia solanacearum) protein is Urease subunit beta.